A 196-amino-acid polypeptide reads, in one-letter code: Imidazoleglycerol-phosphate dehydratase (196 aa).

It belongs to the imidazoleglycerol-phosphate dehydratase family.

Its subcellular location is the cytoplasm. It catalyses the reaction D-erythro-1-(imidazol-4-yl)glycerol 3-phosphate = 3-(imidazol-4-yl)-2-oxopropyl phosphate + H2O. The protein operates within amino-acid biosynthesis; L-histidine biosynthesis; L-histidine from 5-phospho-alpha-D-ribose 1-diphosphate: step 6/9. This is Imidazoleglycerol-phosphate dehydratase from Moorella thermoacetica (strain ATCC 39073 / JCM 9320).